A 63-amino-acid chain; its full sequence is Translational regulator CsrA (63 aa).

The protein belongs to the CsrA/RsmA family. As to quaternary structure, homodimer; the beta-strands of each monomer intercalate to form a hydrophobic core, while the alpha-helices form wings that extend away from the core.

It is found in the cytoplasm. In terms of biological role, a key translational regulator that binds mRNA to regulate translation initiation and/or mRNA stability. Mediates global changes in gene expression, shifting from rapid growth to stress survival by linking envelope stress, the stringent response and the catabolite repression systems. Usually binds in the 5'-UTR; binding at or near the Shine-Dalgarno sequence prevents ribosome-binding, repressing translation, binding elsewhere in the 5'-UTR can activate translation and/or stabilize the mRNA. Its function is antagonized by small RNA(s). The polypeptide is Translational regulator CsrA (Haemophilus influenzae (strain 86-028NP)).